A 273-amino-acid polypeptide reads, in one-letter code: Putative pyruvate, phosphate dikinase regulatory protein (273 aa).

Position 153–160 (153–160 (GISRTSKT)) interacts with ADP.

Belongs to the pyruvate, phosphate/water dikinase regulatory protein family. PDRP subfamily.

It carries out the reaction N(tele)-phospho-L-histidyl/L-threonyl-[pyruvate, phosphate dikinase] + ADP = N(tele)-phospho-L-histidyl/O-phospho-L-threonyl-[pyruvate, phosphate dikinase] + AMP + H(+). It catalyses the reaction N(tele)-phospho-L-histidyl/O-phospho-L-threonyl-[pyruvate, phosphate dikinase] + phosphate + H(+) = N(tele)-phospho-L-histidyl/L-threonyl-[pyruvate, phosphate dikinase] + diphosphate. Its function is as follows. Bifunctional serine/threonine kinase and phosphorylase involved in the regulation of the pyruvate, phosphate dikinase (PPDK) by catalyzing its phosphorylation/dephosphorylation. The chain is Putative pyruvate, phosphate dikinase regulatory protein from Agrobacterium fabrum (strain C58 / ATCC 33970) (Agrobacterium tumefaciens (strain C58)).